The sequence spans 195 residues: Ferredoxin-2, mitochondrial (195 aa).

The transit peptide at 1–61 (MAAAAAVRAG…RRLRTSIGVC (61 aa)) directs the protein to the mitochondrion. A 2Fe-2S ferredoxin-type domain is found at 81-182 (NVVYIDRSGR…GMELTLPKVT (102 aa)). Cys117, Cys123, Cys126, and Cys163 together coordinate [2Fe-2S] cluster.

It belongs to the adrenodoxin/putidaredoxin family. In terms of assembly, component of the mitochondrial core iron-sulfur cluster (ISC) complex composed of NFS1, LYRM4, NDUFAB1, ISCU, FXN, and FDX2; this complex is a heterohexamer containing two copies of each monomer. Form a heterodimer complex with NFS1. It depends on [2Fe-2S] cluster as a cofactor.

Its subcellular location is the mitochondrion. It localises to the mitochondrion matrix. Functionally, electron donor, of the core iron-sulfur cluster (ISC) assembly complex, that acts to reduce the persulfide into sulfide during [2Fe-2S] clusters assembly on the scaffolding protein ISCU. The core iron-sulfur cluster (ISC) assembly complex is involved in the de novo synthesis of a [2Fe-2S] cluster, the first step of the mitochondrial iron-sulfur protein biogenesis. This process is initiated by the cysteine desulfurase complex (NFS1:LYRM4:NDUFAB1) that produces persulfide which is delivered on the scaffold protein ISCU in a FXN-dependent manner. Then this complex is stabilized by FDX2 which provides reducing equivalents to accomplish the [2Fe-2S] cluster assembly. Finally, the [2Fe-2S] cluster is transferred from ISCU to chaperone proteins, including HSCB, HSPA9 and GLRX5. Essential for coenzyme Q biosynthesis: together with FDXR, transfers the electrons required for the hydroxylation reaction performed by COQ6. This is Ferredoxin-2, mitochondrial from Danio rerio (Zebrafish).